A 212-amino-acid chain; its full sequence is Methylthioribulose-1-phosphate dehydratase (212 aa).

Residues histidine 97 and histidine 99 each contribute to the Zn(2+) site.

It belongs to the aldolase class II family. MtnB subfamily. In terms of assembly, homotetramer. Zn(2+) serves as cofactor.

It carries out the reaction 5-(methylsulfanyl)-D-ribulose 1-phosphate = 5-methylsulfanyl-2,3-dioxopentyl phosphate + H2O. The protein operates within amino-acid biosynthesis; L-methionine biosynthesis via salvage pathway; L-methionine from S-methyl-5-thio-alpha-D-ribose 1-phosphate: step 2/6. Its function is as follows. Catalyzes the dehydration of methylthioribulose-1-phosphate (MTRu-1-P) into 2,3-diketo-5-methylthiopentyl-1-phosphate (DK-MTP-1-P). The polypeptide is Methylthioribulose-1-phosphate dehydratase (Bacillus cereus (strain B4264)).